We begin with the raw amino-acid sequence, 1716 residues long: Histone-lysine N-methyltransferase SETD1A (1716 aa).

The interaction with WDR82 stretch occupies residues 60–89 (LQDPRCHVRSKARDFSLPVPKFKLDEFYIG). The region spanning 84-172 (DEFYIGQIPL…NIIHAQLDIK (89 aa)) is the RRM domain. 7 disordered regions span residues 194 to 367 (PTGG…SSYP), 380 to 499 (TSYP…AQHS), 516 to 670 (FSFL…PPPH), 849 to 869 (AKPF…EKMK), 911 to 1206 (KRKE…SRKV), 1230 to 1259 (EEVA…GTEV), and 1275 to 1297 (GLAT…AERP). Positions 222–231 (SDTAAYPAGT) are enriched in low complexity. The span at 243–277 (CSQDTNFSSSRQDTPSSFGQFTPQSSQGTPYTSRG) shows a compositional bias: polar residues. Low complexity-rich tracts occupy residues 278–295 (STPY…TSTS) and 315–357 (STSS…SSAS). Residues 430–440 (SEAPPPEPPEP) show a composition bias toward pro residues. Positions 441–461 (GGGGGGSGGGGGGGGGGGGGA) are enriched in gly residues. S477 carries the post-translational modification Phosphoserine. Residues 477–487 (SPARSGSPAPE) are compositionally biased toward low complexity. The segment covering 488-499 (TTNESVPFAQHS) has biased composition (polar residues). 2 positions are modified to phosphoserine: S521 and S578. Positions 581 to 591 (ANGQNQASPCS) are enriched in polar residues. Composition is skewed to pro residues over residues 606–631 (SPPP…PPPY) and 638–670 (GYPP…PPPH). The segment covering 859–869 (QAKEEDKEKMK) has biased composition (basic and acidic residues). At S930 the chain carries Phosphoserine. Acidic residues-rich tracts occupy residues 991-1009 (KDED…EEAV) and 1018-1027 (ASDGEDEDSD). The span at 1028–1071 (SSSQCSLYADSDGENGSTSDSESGSSSSSSSSSSSSSSSSSSES) shows a compositional bias: low complexity. S1110 is modified (phosphoserine). The span at 1130 to 1150 (EEPPPSVPQPPAEPPAGPPDA) shows a compositional bias: pro residues. The segment covering 1283 to 1292 (DDSEATETSD) has biased composition (acidic residues). Residues 1307-1311 (EHNYA) carry the HCFC1-binding motif (HBM) motif. Disordered regions lie at residues 1355–1427 (EEPK…FEPR) and 1480–1508 (TNLS…SEGY). The span at 1369–1383 (EGEEEEEDEEEESES) shows a compositional bias: acidic residues. Residues 1399–1412 (RRRSLRSHTRRRRP) show a composition bias toward basic residues. Pro residues predominate over residues 1413–1424 (PLPPPPPPPPSF). An interaction with CFP1 region spans residues 1424–1459 (FEPRSEFEQMTILYDIWNSGLDLEDMSYLRLTYERL). Positions 1459–1546 (LLQQTSGADW…GTNRVLSERR (88 aa)) are interaction with ASH2L, RBBP5 and WDR5. The short motif at 1501-1506 (GSARSE) is the WDR5 interaction motif (WIN) element. A RxxxRR motif motif is present at residues 1546–1551 (RSEQRR). The 118-residue stretch at 1577 to 1694 (KKLRFGRSRI…VDEEITYDYK (118 aa)) folds into the SET domain. Y1693 serves as a coordination point for S-adenosyl-L-methionine. Positions 1700–1716 (NKIPCLCGTESCRGSLN) constitute a Post-SET domain.

It belongs to the class V-like SAM-binding methyltransferase superfamily. As to quaternary structure, component of the SET1A/COMPASS complex composed of the catalytic subunit SETD1A, WDR5, WDR82, RBBP5, ASH2L/ASH2, CXXC1/CFP1, HCFC1 and DPY30 homotrimer. Forms a core complex with the evolutionary conserved subcomplex WRAD composed of WDR5, RBBP5, ASH2L/ASH2 and DPY30 subunits; WRAD differentially stimulates the methyltransferase activity. Interacts with BOD1L1 (via COMPASS-Shg1 domain) at replication forks. Interacts with HCFC1. Interacts with ASH2/ASH2L. Interacts with CXXC1/CFP1. Interacts with RBBP5. Interacts (via N-terminal region) with WDR82; the interaction is direct. Interacts (via the RRM domain) with hyperphosphorylated C-terminal domain (CTD) of RNA polymerase II large subunit (POLR2A) only in the presence of WDR82. Binds specifically to CTD heptad repeats phosphorylated on 'Ser-5' of each heptad. Interacts with ZNF335. Interacts with SUPT6H. Interacts with NAP1L1. Interacts (via WIN motif) with WDR5.

It is found in the nucleus. Its subcellular location is the nucleus speckle. The protein resides in the chromosome. It localises to the cytoplasm. It catalyses the reaction L-lysyl(4)-[histone H3] + S-adenosyl-L-methionine = N(6)-methyl-L-lysyl(4)-[histone H3] + S-adenosyl-L-homocysteine + H(+). The catalysed reaction is N(6)-methyl-L-lysyl(4)-[histone H3] + S-adenosyl-L-methionine = N(6),N(6)-dimethyl-L-lysyl(4)-[histone H3] + S-adenosyl-L-homocysteine + H(+). The enzyme catalyses N(6),N(6)-dimethyl-L-lysyl(4)-[histone H3] + S-adenosyl-L-methionine = N(6),N(6),N(6)-trimethyl-L-lysyl(4)-[histone H3] + S-adenosyl-L-homocysteine + H(+). Functionally, histone methyltransferase that catalyzes methyl group transfer from S-adenosyl-L-methionine to the epsilon-amino group of 'Lys-4' of histone H3 (H3K4) via a non-processive mechanism. Part of chromatin remodeling machinery, forms H3K4me1, H3K4me2 and H3K4me3 methylation marks at active chromatin sites where transcription and DNA repair take place. Responsible for H3K4me3 enriched promoters and transcriptional programming of inner mass stem cells and neuron progenitors during embryogenesis. Required for H3K4me1 mark at stalled replication forks. Mediates FANCD2-dependent nucleosome remodeling and RAD51 nucleofilaments stabilization at reversed forks, protecting them from nucleolytic degradation. Does not methylate 'Lys-4' of histone H3 if the neighboring 'Lys-9' residue is already methylated. Has RNA binding activity towards transcripts involved in RNA processing and the DNA damage response. The polypeptide is Histone-lysine N-methyltransferase SETD1A (Setd1a) (Mus musculus (Mouse)).